A 258-amino-acid chain; its full sequence is Mediator of RNA polymerase II transcription subunit 4 (258 aa).

A coiled-coil region spans residues 52 to 101; sequence FRKMLELAEEQAKVEEAMDQLRAKVEVHDREIQKLQKSLKDAELILSTAI. Disordered regions lie at residues 164–208 and 234–258; these read GKSE…EVPN and LETR…SDSQ. Polar residues predominate over residues 166-190; that stretch reads SEQNINGGTVTHQNSGMPSEQQRTL. Positions 194–204 are enriched in gly residues; the sequence is AGSGSGSGAGG. Residues 246–258 show a composition bias toward low complexity; that stretch reads STDSSSSSSSDSQ.

It belongs to the Mediator complex subunit 4 family. Component of the Mediator complex, which includes at least MED4, MED6, MED14, MED17, MED18, MED20, MED21, MED23, MED24, MED27, MED30 and MED31. Interacts with MED10 and MED21.

Its subcellular location is the nucleus. Component of the Mediator complex, a coactivator involved in the regulated transcription of nearly all RNA polymerase II-dependent genes. Mediator functions as a bridge to convey information from gene-specific regulatory proteins to the basal RNA polymerase II transcription machinery. Mediator is recruited to promoters by direct interactions with regulatory proteins and serves as a scaffold for the assembly of a functional preinitiation complex with RNA polymerase II and the general transcription factors. Required for activated transcription of the MtnA, MtnB and MtnD genes. The sequence is that of Mediator of RNA polymerase II transcription subunit 4 (MED4) from Drosophila melanogaster (Fruit fly).